Consider the following 148-residue polypeptide: Putative nickel-responsive regulator (148 aa).

4 residues coordinate Ni(2+): H88, H99, H101, and C107.

Belongs to the transcriptional regulatory CopG/NikR family. Homotetramer. Requires Ni(2+) as cofactor.

Its function is as follows. Transcriptional regulator. The protein is Putative nickel-responsive regulator of Helicobacter pylori (strain ATCC 700392 / 26695) (Campylobacter pylori).